Here is a 324-residue protein sequence, read N- to C-terminus: Palmitoyltransferase SWF1 (324 aa).

Residue M1 is a topological domain, lumenal. A helical membrane pass occupies residues 2–22 (FLLFLLFVVSQVGLLVFSPKF). Residues 23–49 (KDLILFRWYYQHIYYPLFTDYTRYRWK) are Cytoplasmic-facing. A helical transmembrane segment spans residues 50–70 (YWLVPGFYACILIFCVHLFYN). The Lumenal portion of the chain corresponds to 71-84 (KLNDTVNPYLYSLE). The chain crosses the membrane as a helical span at residues 85-105 (KAFIPITIAFTSLTGVASVFV). Topologically, residues 106 to 173 (KPLGLQAGPQ…VGYGNYEYFY (68 aa)) are cytoplasmic. In terms of domain architecture, DHHC spans 127–177 (AVCQTCKTIKVPRSKHCPICERCIPLHDHHCIWINNCVGYGNYEYFYSFLL). The chain crosses the membrane as a helical span at residues 174–194 (SFLLSNCLLLTYASLRLLTLF). The Lumenal portion of the chain corresponds to 195 to 203 (RITAFKKDK). A helical transmembrane segment spans residues 204-224 (FFLSLFLLTTAFSLIAIVFTY). At 225–324 (YQLKLVNDGM…NLKERIHLLD (100 aa)) the chain is on the cytoplasmic side.

Belongs to the DHHC palmitoyltransferase family. SWF1 subfamily.

The protein localises to the endoplasmic reticulum membrane. It catalyses the reaction L-cysteinyl-[protein] + hexadecanoyl-CoA = S-hexadecanoyl-L-cysteinyl-[protein] + CoA. In terms of biological role, palmitoyltransferase that targets several endosomal SNAREs. Palmitoylates the SNAREs at cysteine residues close to the cytoplasmic end of their transmembrane domain. May have a role in the cellular quality control of transmembrane domain-containing proteins. This is Palmitoyltransferase SWF1 (SWF1) from Kluyveromyces lactis (strain ATCC 8585 / CBS 2359 / DSM 70799 / NBRC 1267 / NRRL Y-1140 / WM37) (Yeast).